The primary structure comprises 234 residues: MLTYETWEENDVSFSEEDETKGALSVLSWAYKEYENEIVYACSFGVEGMVLLHLINQVNPSAKVVFLDTNVHFQETYELIQKVRERFPSLNIIEKQPKLTLNEQAKLHGDKLWESNPNLCCKIRKILPLEESLANEKAWISGLRREQSETRKHTKFINQDHRFQSIKVCPLIHWTWKEVWRYVYKHSLPYNPLHDVGYPSIGCEKCTLPVGEGGDSRDGRWAGKVKTECGLHYQ.

Positions 120, 121, 203, and 206 each coordinate [4Fe-4S] cluster. The Nucleophile; cysteine thiosulfonate intermediate role is filled by Cys229.

Belongs to the PAPS reductase family. CysH subfamily. [4Fe-4S] cluster is required as a cofactor.

The protein resides in the cytoplasm. It carries out the reaction [thioredoxin]-disulfide + sulfite + AMP + 2 H(+) = adenosine 5'-phosphosulfate + [thioredoxin]-dithiol. It functions in the pathway sulfur metabolism; hydrogen sulfide biosynthesis; sulfite from sulfate. Its function is as follows. Catalyzes the formation of sulfite from adenosine 5'-phosphosulfate (APS) using thioredoxin as an electron donor. In Bacillus cereus (strain 03BB102), this protein is Adenosine 5'-phosphosulfate reductase.